We begin with the raw amino-acid sequence, 591 residues long: Phenylalanine--tRNA ligase beta subunit (591 aa).

The B5 domain occupies Leu-304 to Thr-380. Residues Asp-358, Asp-364, Glu-367, and Asp-368 each coordinate Mg(2+).

The protein belongs to the phenylalanyl-tRNA synthetase beta subunit family. Type 2 subfamily. In terms of assembly, tetramer of two alpha and two beta subunits. Mg(2+) serves as cofactor.

The protein resides in the cytoplasm. The catalysed reaction is tRNA(Phe) + L-phenylalanine + ATP = L-phenylalanyl-tRNA(Phe) + AMP + diphosphate + H(+). The polypeptide is Phenylalanine--tRNA ligase beta subunit (Caenorhabditis elegans).